The following is a 206-amino-acid chain: Ubiquitin-conjugating enzyme E2 S (206 aa).

The UBC core domain maps to 14 to 160; it reads QTIRQVMKEL…ARMMTEIHAQ (147 aa). The Glycyl thioester intermediate role is filled by Cys-98. The disordered stretch occupies residues 165–191; that stretch reads GVSDAKDDDGPSNKKHAGLDKKLQDKK. A compositionally biased stretch (basic and acidic residues) spans 168-191; it reads DAKDDDGPSNKKHAGLDKKLQDKK.

The protein belongs to the ubiquitin-conjugating enzyme family.

The catalysed reaction is S-ubiquitinyl-[E1 ubiquitin-activating enzyme]-L-cysteine + [E2 ubiquitin-conjugating enzyme]-L-cysteine = [E1 ubiquitin-activating enzyme]-L-cysteine + S-ubiquitinyl-[E2 ubiquitin-conjugating enzyme]-L-cysteine.. It functions in the pathway protein modification; protein ubiquitination. Functionally, catalyzes the covalent attachment of ubiquitin to other proteins. Acts as an essential factor of the anaphase promoting complex/cyclosome (APC/C), a cell cycle-regulated ubiquitin ligase that controls progression through mitosis. Acts by specifically elongating polyubiquitin chains initiated by the E2 enzyme vih/UbcH10 on APC/C substrates, enhancing the degradation of APC/C substrates by the proteasome and promoting mitotic exit. The sequence is that of Ubiquitin-conjugating enzyme E2 S from Drosophila mojavensis (Fruit fly).